Here is a 448-residue protein sequence, read N- to C-terminus: MLMHEKLMAGQFFDLKTDRKPLMHHHQYQHHQQQPLHHLPHSQLPVQGSLGLPKMDLYTAYAYQQQLLGAALSQQQQQQQQQQQHQQLQQQHTSSAEVLDLSRRCDSVETPRKTPSPYQTSYSYGSGSPSASPTSNLLYAAQMQQQQHQQQQQQQQQQQQLASLYPAFYYSNIKQEQATPTAAPPKVTPTANLLQTFAAASAAAAAAAAASSTNSPRPASNASTMQIDVLENPLSPAVEATTPTTSSSGEAGKNTRPFKAFPRDPLVIAANFAATDVLLDNPRVERYTEYRKRVLEQIRSSNGGSRTVTNPKMRRTNSRSGSVNEGSSSNNNSESEDRAAAEESSDCDSQAGNFESKSATSSSSNLANATAANSGISSGSQVKDAAYYERRRKNNAAAKKSRDRRRIKEDEIAIRAAYLERQNIELLCQIDALKVQLAAFTSAKVTTA.

Disordered regions lie at residues 23-47 (MHHH…LPVQ), 83-134 (QQHQ…ASPT), 238-259 (VEAT…RPFK), and 298-363 (IRSS…TSSS). Residues 30–47 (HHQQQPLHHLPHSQLPVQ) are compositionally biased toward low complexity. A compositionally biased stretch (basic and acidic residues) spans 100-112 (DLSRRCDSVETPR). A compositionally biased stretch (low complexity) spans 115–134 (PSPYQTSYSYGSGSPSASPT). Residues 298 to 310 (IRSSNGGSRTVTN) are compositionally biased toward polar residues. Positions 318-333 (SRSGSVNEGSSSNNNS) are enriched in low complexity. Residues 384-447 (DAAYYERRRK…AAFTSAKVTT (64 aa)) enclose the bZIP domain. The tract at residues 390-406 (RRRKNNAAAKKSRDRRR) is basic motif. The interval 407–414 (IKEDEIAI) is leucine-zipper.

The protein belongs to the bZIP family. Homodimer or heterodimer. Phosphorylated at multiple sites.

It localises to the nucleus. Functionally, represses the expression of both the krueppel and knirps segmentation gap genes. Binds, in vitro, to the krueppel regulatory elements CD1 and CD2. It is required in the early embryo for the development of portions of the head and abdomen. This chain is Protein giant (gt), found in Drosophila melanogaster (Fruit fly).